The sequence spans 308 residues: Ribonuclease Z (308 aa).

Residues H60, H62, D64, H65, H140, D209, and H269 each coordinate Zn(2+). D64 functions as the Proton acceptor in the catalytic mechanism.

Belongs to the RNase Z family. In terms of assembly, homodimer. Requires Zn(2+) as cofactor.

The catalysed reaction is Endonucleolytic cleavage of RNA, removing extra 3' nucleotides from tRNA precursor, generating 3' termini of tRNAs. A 3'-hydroxy group is left at the tRNA terminus and a 5'-phosphoryl group is left at the trailer molecule.. Zinc phosphodiesterase, which displays some tRNA 3'-processing endonuclease activity. Probably involved in tRNA maturation, by removing a 3'-trailer from precursor tRNA. The chain is Ribonuclease Z from Methanococcus maripaludis (strain DSM 14266 / JCM 13030 / NBRC 101832 / S2 / LL).